The chain runs to 1003 residues: SWI/SNF-related matrix-associated actin-dependent regulator of chromatin subfamily A containing DEAD/H box 1 (1003 aa).

Disordered regions lie at residues 15-130 (KKID…SKYK), 172-235 (GSSR…HFPD), and 274-351 (AKKE…EDYS). Composition is skewed to basic and acidic residues over residues 172–188 (GSSR…DSSP), 221–235 (KQEA…HFPD), and 274–294 (AKKE…DNKS). Positions 221–264 (KQEASVKKLQRHFPDLDKEELREVLQEHDWSFHEALEALKLFAE) constitute a CUE domain. Low complexity predominate over residues 295–311 (SAKAKANQNSNKAMAQN). Residues 321-333 (KYSENAKRDTRDL) are compositionally biased toward basic and acidic residues. Residues 486 to 654 (ALLHKHKVNM…MSLLNFVMPH (169 aa)) enclose the Helicase ATP-binding domain. 499-506 (DEMGLGKT) contacts ATP. The short motif at 605 to 608 (DEGH) is the DEGH box element. The Helicase C-terminal domain maps to 835-997 (ILEKLLSDIK…TIPLDMATLL (163 aa)).

It belongs to the SNF2/RAD54 helicase family.

It is found in the nucleus. Its subcellular location is the chromosome. The catalysed reaction is ATP + H2O = ADP + phosphate + H(+). In terms of biological role, DNA helicase that possesses intrinsic ATP-dependent nucleosome-remodeling activity and is both required for DNA repair and heterochromatin organization. Promotes DNA end resection of double-strand breaks (DSBs) following DNA damage: probably acts by weakening histone DNA interactions in nucleosomes flanking DSBs. Required for the restoration of heterochromatin organization after replication. In Xenopus tropicalis (Western clawed frog), this protein is SWI/SNF-related matrix-associated actin-dependent regulator of chromatin subfamily A containing DEAD/H box 1 (smarcad1).